A 1416-amino-acid polypeptide reads, in one-letter code: Phospholipid-transporting ATPase VD (1416 aa).

The Cytoplasmic segment spans residues 1–97; that stretch reads MTELLQWARH…PRNLFEQFHR (97 aa). The helical transmembrane segment at 98–118 threads the bilayer; that stretch reads AANLYFLFLVVLNWVPLVEAF. At 119 to 120 the chain is on the exoplasmic loop side; the sequence is QK. A helical membrane pass occupies residues 121-141; sequence EITMLPLVVVLTIIAIKDGLE. Over 142–321 the chain is Cytoplasmic; the sequence is DYRKYKIDKQ…SKLERRANTD (180 aa). Residues 322–342 traverse the membrane as a helical segment; that stretch reads VLWCVLLLIVMCLTGALGHGI. Residues 343 to 365 lie on the Exoplasmic loop side of the membrane; sequence WLSRYENMLFFNIPEPDGRVISP. Residues 366-386 traverse the membrane as a helical segment; the sequence is VLTGFYVFWTMIILLQVLIPI. The Cytoplasmic segment spans residues 387–1110; it reads SLYVSIEIVK…HWCYTRLSNM (724 aa). Asp-438 acts as the 4-aspartylphosphate intermediate in catalysis. ATP contacts are provided by Asp-438, Lys-439, and Thr-440. Position 438 (Asp-438) interacts with Mg(2+). A Mg(2+)-binding site is contributed by Thr-440. The tract at residues 498-544 is disordered; it reads AQGCRTVPSGPLGKPSAQLSGSTSAVGNGEGSGEVPHSRQAAFSSPM. The span at 514-523 shows a compositional bias: polar residues; it reads AQLSGSTSAV. Positions 729, 771, 795, 838, 918, 919, and 920 each coordinate ATP. The disordered stretch occupies residues 971–990; the sequence is PELASSRKNFPQPSDAQGQG. A compositionally biased stretch (polar residues) spans 976-987; the sequence is SRKNFPQPSDAQ. ATP-binding positions include 993-1000, Arg-1027, and Lys-1033; that span reads GLVITGKT. Residue Asp-1053 participates in Mg(2+) binding. Asn-1056 and Asp-1057 together coordinate ATP. Position 1057 (Asp-1057) interacts with Mg(2+). The helical transmembrane segment at 1111 to 1131 threads the bilayer; the sequence is ILYFFYKNVAYVNLLFWYQFF. The Exoplasmic loop segment spans residues 1132-1142; the sequence is CGFSGTSMTDY. Residues 1143-1163 form a helical membrane-spanning segment; it reads WVLIFFNLLFTSVPPIIYGVL. Topologically, residues 1164 to 1192 are cytoplasmic; sequence EKDVSAETLLQLPELYRSGQRSEEYLPLT. A helical transmembrane segment spans residues 1193–1213; the sequence is FWITLLDAFYQSLVCFFVPYF. Over 1214–1221 the chain is Exoplasmic loop; the sequence is TYQGSDID. Residues 1222 to 1242 form a helical membrane-spanning segment; that stretch reads IFTFGNPLNTAALFIILLHLV. Residues 1243-1252 are Cytoplasmic-facing; it reads IESKSLTWIH. Residues 1253–1273 form a helical membrane-spanning segment; it reads MLVTVGSILSYFFFALAFGAL. At 1274 to 1289 the chain is on the exoplasmic loop side; that stretch reads CVTCNPPSNPYGIMRK. A helical membrane pass occupies residues 1290–1310; sequence HMLDPVFYLVCVLTTFVALLP. Over 1311-1416 the chain is Cytoplasmic; that stretch reads RFLYRVLQGS…ASKMTGSSAS (106 aa). The interval 1358-1416 is disordered; that stretch reads SKHASQSAAMSGRPTPGSSAVLAMKSATVSTVEQSTRETALDRGCSEPGASKMTGSSAS. An ATP-binding site is contributed by 1361 to 1368; sequence ASQSAAMS. Residues 1392–1402 are compositionally biased toward basic and acidic residues; the sequence is STRETALDRGC.

This sequence belongs to the cation transport ATPase (P-type) (TC 3.A.3) family. Type IV subfamily. As to quaternary structure, component of a P4-ATPase flippase complex which consists of a catalytic alpha subunit ATP10A and an accessory beta subunit TMEM30A. Mg(2+) serves as cofactor. In terms of processing, autophosphorylated at the conserved aspartate of the P-type ATPase signature sequence. As to expression, expressed at low amounts in liver, brain, testes, and kidney (at protein level). Expressed in placenta.

Its subcellular location is the cell membrane. The protein localises to the endoplasmic reticulum membrane. The catalysed reaction is ATP + H2O + phospholipidSide 1 = ADP + phosphate + phospholipidSide 2.. The enzyme catalyses a beta-D-glucosyl-(1&lt;-&gt;1')-N-acylsphing-4-enine(out) + ATP + H2O = a beta-D-glucosyl-(1&lt;-&gt;1')-N-acylsphing-4-enine(in) + ADP + phosphate + H(+). Functionally, catalytic component of a P4-ATPase flippase complex, which catalyzes the hydrolysis of ATP coupled to the transport of glucosylceramide (GlcCer) from the outer to the inner leaflet of the plasma membrane. This is Phospholipid-transporting ATPase VD (Atp10d) from Mus musculus (Mouse).